The primary structure comprises 569 residues: Pyruvate decarboxylase (569 aa).

Residues Asp38 and His124 each coordinate pyruvate. Thiamine diphosphate contacts are provided by residues Thr398 and 421-423 (GSI). Asp451 contacts Mg(2+). Thiamine diphosphate-binding positions include 452-453 (GS) and 478-483 (NQGYTI). Asn478 and Gly480 together coordinate Mg(2+). A pyruvate-binding site is contributed by Glu484.

The protein belongs to the TPP enzyme family. As to quaternary structure, homotetramer. Mg(2+) is required as a cofactor. Requires thiamine diphosphate as cofactor.

It carries out the reaction a 2-oxocarboxylate + H(+) = an aldehyde + CO2. The catalysed reaction is pyruvate + H(+) = acetaldehyde + CO2. This chain is Pyruvate decarboxylase (pdcA), found in Aspergillus terreus (strain NIH 2624 / FGSC A1156).